Reading from the N-terminus, the 101-residue chain is Small ribosomal subunit protein uS14 (101 aa).

It belongs to the universal ribosomal protein uS14 family. As to quaternary structure, part of the 30S ribosomal subunit. Contacts proteins S3 and S10.

Functionally, binds 16S rRNA, required for the assembly of 30S particles and may also be responsible for determining the conformation of the 16S rRNA at the A site. In Rhizobium johnstonii (strain DSM 114642 / LMG 32736 / 3841) (Rhizobium leguminosarum bv. viciae), this protein is Small ribosomal subunit protein uS14.